An 89-amino-acid polypeptide reads, in one-letter code: U1-hexatoxin-Iw1e (89 aa).

An N-terminal signal peptide occupies residues 1-18 (MLKFVVLIFVVIMASTFA). 5 disulfide bridges follow: Cys-21–Cys-32, Cys-26–Cys-40, Cys-31–Cys-66, Cys-50–Cys-74, and Cys-68–Cys-81. Positions 87 to 89 (RSE) are excised as a propeptide.

The protein belongs to the MIT-like AcTx family. As to expression, expressed by the venom gland.

It localises to the secreted. This is U1-hexatoxin-Iw1e from Illawarra wisharti (Illawarra funnel-web spider).